Reading from the N-terminus, the 299-residue chain is 4-hydroxy-tetrahydrodipicolinate synthase (299 aa).

Threonine 51 lines the pyruvate pocket. The active-site Proton donor/acceptor is tyrosine 139. Residue lysine 167 is the Schiff-base intermediate with substrate of the active site. Isoleucine 209 lines the pyruvate pocket.

Belongs to the DapA family. Homotetramer; dimer of dimers.

It is found in the cytoplasm. The catalysed reaction is L-aspartate 4-semialdehyde + pyruvate = (2S,4S)-4-hydroxy-2,3,4,5-tetrahydrodipicolinate + H2O + H(+). It functions in the pathway amino-acid biosynthesis; L-lysine biosynthesis via DAP pathway; (S)-tetrahydrodipicolinate from L-aspartate: step 3/4. Its function is as follows. Catalyzes the condensation of (S)-aspartate-beta-semialdehyde [(S)-ASA] and pyruvate to 4-hydroxy-tetrahydrodipicolinate (HTPA). This chain is 4-hydroxy-tetrahydrodipicolinate synthase, found in Methylobacterium radiotolerans (strain ATCC 27329 / DSM 1819 / JCM 2831 / NBRC 15690 / NCIMB 10815 / 0-1).